We begin with the raw amino-acid sequence, 89 residues long: MTTSQKHRDFVAEPMGEKPVGSLAGIGDVLSKRLEERGFDKAYVVLGQFLVLKKDEDLFREWLKDTCGANAKQSRDCFGCLREWCDAFL.

Methionine 1 carries the N-acetylmethionine modification. Threonine 2 bears the N-acetylthreonine; in Barrier-to-autointegration factor, N-terminally processed mark. A phosphothreonine; by VRK1 and VRK2 mark is found at threonine 2 and threonine 3. Position 4 is a phosphoserine; by VRK1 and VRK2 (serine 4). One can recognise a HhH domain in the interval 20-35; that stretch reads VGSLAGIGDVLSKRLE.

It belongs to the BAF family. In terms of assembly, homodimer. Heterodimerizes with BANF2. Interacts with ANKLE2/LEM4, leading to decreased phosphorylation by VRK1 and promoting dephosphorylation by protein phosphatase 2A (PP2A). Binds non-specifically to double-stranded DNA, and is found as a hexamer or dodecamer upon DNA binding. Binds to LEM domain-containing nuclear proteins such as LEMD3/MAN1, TMPO/LAP2 and EMD (emerin). Interacts with ANKLE1 (via LEM domain); the interaction may favor BANF1 dimerization. Interacts with CRX and LMNA (lamin-A). Binds linker histone H1.1 and core histones H3. Interacts with LEMD2 (via LEM domain). Interacts with PARP1; interaction takes place in response to oxidative DNA damage. Ser-4 is the major site of phosphorylation as compared to Thr-2 and Thr-3. Phosphorylation on Thr-2; Thr-3 and Ser-4 disrupts its ability to bind DNA and reduces its ability to bind LEM domain-containing proteins. Non phosphorylated BAF seems to enhance binding between EMD and LMNA. Dephosphorylated by protein phosphatase 2A (PP2A) following interaction with ANKLE2/LEM4 during mitotic exit, leading to mitotic nuclear envelope reassembly.

It localises to the nucleus. It is found in the chromosome. The protein localises to the nucleus envelope. The protein resides in the cytoplasm. In terms of biological role, non-specific DNA-binding protein that plays key roles in mitotic nuclear reassembly, chromatin organization, DNA damage response, gene expression and intrinsic immunity against foreign DNA. Contains two non-specific double-stranded DNA (dsDNA)-binding sites which promote DNA cross-bridging. Plays a key role in nuclear membrane reformation at the end of mitosis by driving formation of a single nucleus in a spindle-independent manner. Transiently cross-bridges anaphase chromosomes via its ability to bridge distant DNA sites, leading to the formation of a dense chromatin network at the chromosome ensemble surface that limits membranes to the surface. Also acts as a negative regulator of innate immune activation by restricting CGAS activity toward self-DNA upon acute loss of nuclear membrane integrity. Outcompetes CGAS for DNA-binding, thereby preventing CGAS activation and subsequent damaging autoinflammatory responses. Also involved in DNA damage response: interacts with PARP1 in response to oxidative stress, thereby inhibiting the ADP-ribosyltransferase activity of PARP1. Involved in the recognition of exogenous dsDNA in the cytosol: associates with exogenous dsDNA immediately after its appearance in the cytosol at endosome breakdown and is required to avoid autophagy. This chain is Barrier-to-autointegration factor, found in Mus musculus (Mouse).